The sequence spans 222 residues: UPF0441 protein CKO_04429 (222 aa).

Residues 177–194 (TVPKTAMAPKPATTTTVT) are compositionally biased toward low complexity. The segment at 177–222 (TVPKTAMAPKPATTTTVTRGGFGESVAKQSTMQRSATGTSNRSMGG) is disordered. Positions 203–222 (AKQSTMQRSATGTSNRSMGG) are enriched in polar residues.

Belongs to the UPF0441 family.

In Citrobacter koseri (strain ATCC BAA-895 / CDC 4225-83 / SGSC4696), this protein is UPF0441 protein CKO_04429.